The following is a 239-amino-acid chain: MSRDPILSLPWPDARPLPDTFFDRDALLVARELLGKVIRHRQGNLWLAARIIETEAYYLEEKGSHASLGYTEKRKALFLDGGHIYMYYARGGDSLNFSAGGPGNAVLIKSGHPWLDRISDHAALERMQNLNPDSQGRPREIGRLCAGQTLLCKAMGLKVPEWDAQRFDPQRLFVDDVGERPSQVIQAARLGIPKGRDEHLPYRFVDAAFAAFCTRNPLRRGQVAGRDYHLLGHQDPHLQ.

Belongs to the DNA glycosylase MPG family.

This is Putative 3-methyladenine DNA glycosylase from Pseudomonas aeruginosa (strain UCBPP-PA14).